Consider the following 303-residue polypeptide: uncharacterized protein (303 aa).

In terms of domain architecture, S4 RNA-binding spans 15-74 (ERIDKFLASTENDWSRTQVQQWVKDGQVVVNGSAVKANYKIQPGDQVTVTVPEPEALDVL). Asp138 is an active-site residue.

The protein belongs to the pseudouridine synthase RluA family.

The catalysed reaction is a uridine in RNA = a pseudouridine in RNA. This is an uncharacterized protein from Bacillus subtilis (strain 168).